A 1477-amino-acid polypeptide reads, in one-letter code: MAELHPRTGKLISLSNGNRTAARKQPAQEFNQGLVVSARPLGPGEVFTVRLDRKMNSWSGSMEIGLTTQDPAFLDFPSSATGLKGGSWIVSGCSVLEDGRSVLEEYGQDLDQLGEGDRVGVQRSISGELHLWVNGRDCGAASCGIPPRVWAVVDLYGKCTQITVLSCQPPPEEEEEEDAEEQEGSLVPLGQSRPDKFPNSLDTDSGFPSTELSAVVSNAILSAYHGSLLSVSLGSPPAAIEHSPPTCNDALLFHEKCGTLIKLSNGNKTAERRRPLDEFNNGVVMTNRPLRDCEMFEIRIDKLVDKWSGSIEIGVTTHNPNSLEYPATMTNLRSGTIMMSGCGILTNGKGTRREYCEFSLDELQEGDHIGLTRKSSGALHFYINGMDQGVASCQTPPVVYGVVDLYGMAVKVTIVHNHNHADRLRRNNAILRARSPDTGRHSSSTPEPGQLLFHSNCGQKASIINGGRTALRPHATDDFNHGVVLSNRPLQNNEVFQVRIDKMVDKWAGSIEIGVTTHNPAYLQLPSTMTNLRSGTWMMTGNGVMHNGTTILDEYGHNLDRLKAGDTVGVVRREDGTLNFFVNGIAQGVAAWNVPPNVFAVVDLYGQAAQATIMDESDALPLPGDEDEGLALTPGTPCALLSLSDLRFHHLHGANALITNGGRTVLRKNSRSEFNDAIVMSSRPLRDGEMFEIVIQKMVDRWSGSIEAGVTAIRPEDLEFPNTMTDIDYDTWMLSGTAIMQDGNTLRNNYGCDLDSLGAGSRIGMMKTIRGDLHYFINGEDQGVACTGLPMGRDIYAVIDLYGQCVQVSLTGGSGLVDNSLSASHVTDKSLPSQSPVPSVSHRFHTVCGKNVSVLCDGTRAERGAGCSHGIVFSSRELLTNETFEIRVEKIEPHWSGSCNIGVTSLSPHEVSLLGGGLPERALELRSKVTWLVCGSEVTRNGQRLRENYCNSLERVRVGSRLGVRRDSDDTLHILMNGEDMGPAACGIPKAVYAVLDIHGCITALSTVSSSLLEEPDATKPPSITSESEEEEDPADHGDPHTVIQAHSLQFLANHGKNILLSHGNRTATRVSSYNQGIVVLPQPLPRLFLFQIRIDQLSPHWTSSLSIGVIAVSPERLNFPATAAALKRSSWIFQRSAVLCNGVKIREGYGPNLDLCPEGTCLGLLLDSSGGLHLYVNGLDQGVGAQDLPEVCYVLVDLYGQCEQVSIVTGEAQGAELDAHEGQLPGEREKADMVDGVKESLCWVPPDPVALLSCEYLALCTRFKDLLLLPDGYFLEDSKLCVCHCDSCHKLRGDETYRKRGDPPREYAEPIGWCSFPLRLSPRSSCAQYKKWHIAYQGSSAGTIRRTLDRGDLLPGSACILTSVPAKSDPQSGFPAAEPNVLPPRDLQSVVLSPTLRYAALPEMCPKVMFRDPRSQRMFGAQVALQVCVRPGSYKTGPPSACAIDLMDPRIPSSEMEFLTKEKGATVLRGLLVRVE.

2 disordered regions span residues 1–26 and 168–196; these read MAEL…RKQP and QPPP…RPDK. Positions 1–167 constitute an NHR 1 domain; it reads MAELHPRTGK…KCTQITVLSC (167 aa). Acidic residues predominate over residues 171–183; the sequence is PEEEEEEDAEEQE. 4 consecutive NHR domains span residues 250-417, 450-616, 645-813, and 841-1010; these read ALLF…IVHN, QLLF…IMDE, DLRF…LTGG, and SHRF…TVSS. The disordered stretch occupies residues 1012-1041; that stretch reads LLEEPDATKPPSITSESEEEEDPADHGDPH. Residues 1048–1211 enclose the NHR 6 domain; it reads SLQFLANHGK…QCEQVSIVTG (164 aa).

Post-translationally, ubiquitinated. This ubiquitination leads to proteasomal degradation.

It localises to the cytoplasm. Its subcellular location is the cytoskeleton. It is found in the microtubule organizing center. The protein resides in the centrosome. The protein localises to the centriole. Its function is as follows. Promotes CCP110 ubiquitination and proteasome-dependent degradation. By counteracting accumulation of CP110, maintains normal centriolar homeostasis and preventing formation of ectopic microtubular organizing centers. This Xenopus tropicalis (Western clawed frog) protein is Neuralized-like protein 4 (neurl4).